Reading from the N-terminus, the 398-residue chain is MPAKRKPVLPALTITPSPAEGPGPGGSAEANLVDLQKKLEELELDEQQKKRLEAFLTQKAKVGELKDDDFERISELGAGNGGVVTKVQHKPSGLIMARKLIHLEIKPAIRNQIIRELQVLHECNSPYIVGFYGAFYSDGEISICMEHMDGGSLDQVLKEAKRIPEEILGKVSIAVLRGLAYLREKHQIMHRDVKPSNILVNSRGEIKLCDFGVSGQLIDSMANSFVGTRSYMSPERLQGTHYSVQSDIWSMGLSLVELSIGRYPIPPPDSKELEAIFGRPVVDGAEGESHSVSPWARPPGRPISGHGMDSRPAMAIFELLDYIVNEPPPKLPNGVFTQDFQEFVNKCLIKNPAERADLKMLMNHTFIKRSEVEEVDFAGWLCKTLRLNQPSTPTRAAV.

The disordered stretch occupies residues 1–29; it reads MPAKRKPVLPALTITPSPAEGPGPGGSAE. The region spanning 70–367 is the Protein kinase domain; the sequence is FERISELGAG…LKMLMNHTFI (298 aa). ATP contacts are provided by residues 76-84 and Lys99; that span reads LGAGNGGVV. The Proton acceptor role is filled by Asp192. A phosphoserine; by RAF mark is found at Ser220 and Ser224.

This sequence belongs to the protein kinase superfamily. STE Ser/Thr protein kinase family. MAP kinase kinase subfamily. Post-translationally, activated by phosphorylation on Ser/Thr catalyzed by MAP kinase kinase kinases (RAF).

The enzyme catalyses L-seryl-[protein] + ATP = O-phospho-L-seryl-[protein] + ADP + H(+). It catalyses the reaction L-threonyl-[protein] + ATP = O-phospho-L-threonyl-[protein] + ADP + H(+). The catalysed reaction is L-tyrosyl-[protein] + ATP = O-phospho-L-tyrosyl-[protein] + ADP + H(+). Its function is as follows. Catalyzes the concomitant phosphorylation of a threonine and a tyrosine residue in a Thr-Glu-Tyr sequence located in MAP kinases. Activates the ERK1 and ERK2 MAP kinases. This Gallus gallus (Chicken) protein is Dual specificity mitogen-activated protein kinase kinase 2 (MAP2K2).